The following is a 277-amino-acid chain: Xyloglucan endotransglucosylase/hydrolase protein 19 (277 aa).

The N-terminal stretch at 1–21 (MKSFTFLILFLFAAQSISVYA) is a signal peptide. The GH16 domain occupies 22–213 (GSFHKDVKIH…WSKAPFTAYY (192 aa)). The Nucleophile role is filled by Glu-99. Glu-103 serves as the catalytic Proton donor. Glu-103 contributes to the xyloglucan binding site. Asn-107 carries an N-linked (GlcNAc...) asparagine glycan. Xyloglucan contacts are provided by residues 116–118 (HTN), 126–128 (DKE), 192–193 (HW), and Gly-197. 2 disulfides stabilise this stretch: Cys-221/Cys-230 and Cys-262/Cys-276. Arg-267 is a xyloglucan binding site.

Belongs to the glycosyl hydrolase 16 family. XTH group 2 subfamily. Post-translationally, contains at least one intrachain disulfide bond essential for its enzymatic activity. As to expression, root specific.

It localises to the secreted. The protein localises to the cell wall. Its subcellular location is the extracellular space. The protein resides in the apoplast. It catalyses the reaction breaks a beta-(1-&gt;4) bond in the backbone of a xyloglucan and transfers the xyloglucanyl segment on to O-4 of the non-reducing terminal glucose residue of an acceptor, which can be a xyloglucan or an oligosaccharide of xyloglucan.. Possesses xyloglucan endotransglucosylase (XET) activity in vitro. Does not possess xyloglucan endohydrolysis (XEH) activity. Cleaves and religates xyloglucan polymers, an essential constituent of the primary cell wall, and thereby participates in cell wall construction of growing tissues. Involved in cell proliferation in the tissue reunion process of wounded inflorescence stems. Maybe a downstream target of NAC071 as a consequence of auxin action in wounded stems. The sequence is that of Xyloglucan endotransglucosylase/hydrolase protein 19 from Arabidopsis thaliana (Mouse-ear cress).